The sequence spans 507 residues: MNIFISLAILIATTHCLTLLRDPVTQNGASKFEKSIGKYKYEEGYLKAPIDPFAFTNDLEFDLRYFLNIDHYETGGPILFYTGNEGSLEAFAENTGFMWDLAPELKAAVVFVEHRFYGKSQPFKNESYTDIRHLGYLSSQQALADFALSVQFFKNEKIKGAQKSAVIAFGGSYGGMLSAWFRIKYPHIVDGAIAASAPVFWFTDSNIPEDVYDFIVTRAFLDAGCNRKAIEKGWIALDELAKSDSGRQYLNVLYKLDPKSKLENKDDIGFLKQYIRESMEAMAMVNYPYPTSFLSSLPAWPVKEACKSASQPGKTQEESAEQLYKIVNLYYNYTGDKSTHCANAAKCDSAYGSLGDPLGWPFQTCTEMVMPLCGSGYPNDFFWKDCPFTSEKYAEFCMQTFSSIHYNKTLLRPLAGGLAFGATSLPSASNIVFSNGYLDPWSGGGYDHSDKVQGSVISVILKQGAHHYDLRGAHPQDTEEVKKVRAMETQAIKKWIKEKARNSWRYD.

An N-terminal signal peptide occupies residues 1 to 16 (MNIFISLAILIATTHC). A glycan (N-linked (GlcNAc...) asparagine) is linked at N125. Residue S172 is the Charge relay system of the active site. Residues N332 and N407 are each glycosylated (N-linked (GlcNAc...) asparagine). Active-site charge relay system residues include D439 and H466.

It belongs to the peptidase S28 family.

This Caenorhabditis elegans protein is Prolyl carboxy peptidase like protein 5.